Consider the following 466-residue polypeptide: Putative outer membrane protein NMB0088 (466 aa).

The N-terminal stretch at methionine 1–alanine 24 is a signal peptide.

This sequence belongs to the OmpP1/FadL family.

Its subcellular location is the cell outer membrane. This Neisseria meningitidis serogroup B (strain ATCC BAA-335 / MC58) protein is Putative outer membrane protein NMB0088.